Consider the following 394-residue polypeptide: S-adenosylmethionine synthase 2 (394 aa).

Glu-11 provides a ligand contact to Mg(2+). His-17 is a binding site for ATP. Glu-45 contributes to the K(+) binding site. L-methionine is bound by residues Glu-58 and Gln-101. Residues 169–171 (DGK), 237–240 (SGRF), Asp-248, 254–255 (RK), Ala-271, Lys-275, and Lys-279 each bind ATP. Residue Asp-248 coordinates L-methionine. Lys-279 lines the L-methionine pocket.

This sequence belongs to the AdoMet synthase family. As to quaternary structure, homotetramer. Requires Mn(2+) as cofactor. Mg(2+) serves as cofactor. Co(2+) is required as a cofactor. It depends on K(+) as a cofactor.

Its subcellular location is the cytoplasm. The catalysed reaction is L-methionine + ATP + H2O = S-adenosyl-L-methionine + phosphate + diphosphate. It participates in amino-acid biosynthesis; S-adenosyl-L-methionine biosynthesis; S-adenosyl-L-methionine from L-methionine: step 1/1. In terms of biological role, catalyzes the formation of S-adenosylmethionine from methionine and ATP. The reaction comprises two steps that are both catalyzed by the same enzyme: formation of S-adenosylmethionine (AdoMet) and triphosphate, and subsequent hydrolysis of the triphosphate. In Oryza sativa subsp. japonica (Rice), this protein is S-adenosylmethionine synthase 2 (SAM2).